A 62-amino-acid chain; its full sequence is Large ribosomal subunit protein bL28 (62 aa).

The protein belongs to the bacterial ribosomal protein bL28 family.

The chain is Large ribosomal subunit protein bL28 from Helicobacter pylori (strain P12).